The chain runs to 521 residues: Phomenoic acid biosynthesis cluster-specific transcriptional regulator (521 aa).

Residues 46 to 76 (HCWQCRRSCVVCDFTQPGCQRCSAAGVSCPG) constitute a DNA-binding region (zn(2)-C6 fungal-type).

It localises to the nucleus. In terms of biological role, transcriptional regulator; part of the gene cluster that mediates the biosynthesis of phomenoic acid, a long chain aliphatic carboxylic acid that does not appear to be essential for pathogenicity but may play a role in allowing to outcompete other fungi in the environmental niche via its antifungal properties. Positively regulates the expression of the cluster and subsequent production of phomenoic acid. The polypeptide is Phomenoic acid biosynthesis cluster-specific transcriptional regulator (Leptosphaeria maculans (strain JN3 / isolate v23.1.3 / race Av1-4-5-6-7-8) (Blackleg fungus)).